Here is a 237-residue protein sequence, read N- to C-terminus: Proteasome subunit beta (237 aa).

Residues 1–27 are disordered; that stretch reads MSKFPDLPGMKNLDANPYEPELASFDD. The propeptide at 1–42 is removed in mature form; by autocatalysis; the sequence is MSKFPDLPGMKNLDANPYEPELASFDDMDADAGDGDAVAKTG. The active-site Nucleophile is T43.

Belongs to the peptidase T1B family. In terms of assembly, the 20S proteasome core is composed of 14 alpha and 14 beta subunits that assemble into four stacked heptameric rings, resulting in a barrel-shaped structure. The two inner rings, each composed of seven catalytic beta subunits, are sandwiched by two outer rings, each composed of seven alpha subunits. The catalytic chamber with the active sites is on the inside of the barrel. Has a gated structure, the ends of the cylinder being occluded by the N-termini of the alpha-subunits. Is capped at one or both ends by the proteasome regulatory ATPase, PAN.

Its subcellular location is the cytoplasm. It catalyses the reaction Cleavage of peptide bonds with very broad specificity.. With respect to regulation, the formation of the proteasomal ATPase PAN-20S proteasome complex, via the docking of the C-termini of PAN into the intersubunit pockets in the alpha-rings, triggers opening of the gate for substrate entry. Interconversion between the open-gate and close-gate conformations leads to a dynamic regulation of the 20S proteasome proteolysis activity. In terms of biological role, component of the proteasome core, a large protease complex with broad specificity involved in protein degradation. The polypeptide is Proteasome subunit beta (Halomicrobium mukohataei (strain ATCC 700874 / DSM 12286 / JCM 9738 / NCIMB 13541) (Haloarcula mukohataei)).